Consider the following 660-residue polypeptide: tRNA 5-methylaminomethyl-2-thiouridine biosynthesis bifunctional protein MnmC (660 aa).

Residues 1-242 (MTDRIVPATL…KRAMLVGEFA (242 aa)) are tRNA (mnm(5)s(2)U34)-methyltransferase. The interval 266-660 (IGAGLAGCAV…VRALRHGRVA (395 aa)) is FAD-dependent cmnm(5)s(2)U34 oxidoreductase.

The protein in the N-terminal section; belongs to the methyltransferase superfamily. tRNA (mnm(5)s(2)U34)-methyltransferase family. In the C-terminal section; belongs to the DAO family. FAD serves as cofactor.

Its subcellular location is the cytoplasm. The enzyme catalyses 5-aminomethyl-2-thiouridine(34) in tRNA + S-adenosyl-L-methionine = 5-methylaminomethyl-2-thiouridine(34) in tRNA + S-adenosyl-L-homocysteine + H(+). In terms of biological role, catalyzes the last two steps in the biosynthesis of 5-methylaminomethyl-2-thiouridine (mnm(5)s(2)U) at the wobble position (U34) in tRNA. Catalyzes the FAD-dependent demodification of cmnm(5)s(2)U34 to nm(5)s(2)U34, followed by the transfer of a methyl group from S-adenosyl-L-methionine to nm(5)s(2)U34, to form mnm(5)s(2)U34. This chain is tRNA 5-methylaminomethyl-2-thiouridine biosynthesis bifunctional protein MnmC, found in Burkholderia pseudomallei (strain 1106a).